The chain runs to 1060 residues: Carbamoyl phosphate synthase large chain (1060 aa).

The carboxyphosphate synthetic domain stretch occupies residues 1 to 401 (MPKRTDIRKI…SLLKACRSLE (401 aa)). ATP-binding residues include Arg-129, Arg-169, Gly-175, Gly-176, Arg-208, Ile-210, Glu-215, Gly-241, Ile-242, His-243, Gln-284, and Glu-298. The 195-residue stretch at 133 to 327 (KQLMEELNQP…IAKLAAKIAV (195 aa)) folds into the ATP-grasp 1 domain. Mg(2+)-binding residues include Gln-284, Glu-298, and Asn-300. The Mn(2+) site is built by Gln-284, Glu-298, and Asn-300. The tract at residues 402–546 (IGVDHIKIAD…YSTYAVENES (145 aa)) is oligomerization domain. The tract at residues 547-929 (LISDKASILV…ALYKAFEAAY (383 aa)) is carbamoyl phosphate synthetic domain. An ATP-grasp 2 domain is found at 671–861 (EATLQALNIP…MAQVATKVIL (191 aa)). ATP is bound by residues Arg-707, Ala-746, Leu-748, Glu-752, Gly-777, Val-778, His-779, Ser-780, Gln-820, and Glu-832. 3 residues coordinate Mg(2+): Gln-820, Glu-832, and Asn-834. Positions 820, 832, and 834 each coordinate Mn(2+). One can recognise an MGS-like domain in the interval 930–1060 (LHMPDYGNIV…SRAFTLKVLD (131 aa)). The segment at 930–1060 (LHMPDYGNIV…SRAFTLKVLD (131 aa)) is allosteric domain.

The protein belongs to the CarB family. As to quaternary structure, composed of two chains; the small (or glutamine) chain promotes the hydrolysis of glutamine to ammonia, which is used by the large (or ammonia) chain to synthesize carbamoyl phosphate. Tetramer of heterodimers (alpha,beta)4. The cofactor is Mg(2+). Mn(2+) is required as a cofactor.

The catalysed reaction is hydrogencarbonate + L-glutamine + 2 ATP + H2O = carbamoyl phosphate + L-glutamate + 2 ADP + phosphate + 2 H(+). The enzyme catalyses hydrogencarbonate + NH4(+) + 2 ATP = carbamoyl phosphate + 2 ADP + phosphate + 2 H(+). The protein operates within amino-acid biosynthesis; L-arginine biosynthesis; carbamoyl phosphate from bicarbonate: step 1/1. It participates in pyrimidine metabolism; UMP biosynthesis via de novo pathway; (S)-dihydroorotate from bicarbonate: step 1/3. Its function is as follows. Large subunit of the glutamine-dependent carbamoyl phosphate synthetase (CPSase). CPSase catalyzes the formation of carbamoyl phosphate from the ammonia moiety of glutamine, carbonate, and phosphate donated by ATP, constituting the first step of 2 biosynthetic pathways, one leading to arginine and/or urea and the other to pyrimidine nucleotides. The large subunit (synthetase) binds the substrates ammonia (free or transferred from glutamine from the small subunit), hydrogencarbonate and ATP and carries out an ATP-coupled ligase reaction, activating hydrogencarbonate by forming carboxy phosphate which reacts with ammonia to form carbamoyl phosphate. The protein is Carbamoyl phosphate synthase large chain of Streptococcus agalactiae serotype Ia (strain ATCC 27591 / A909 / CDC SS700).